A 385-amino-acid polypeptide reads, in one-letter code: tRNA-specific 2-thiouridylase MnmA (385 aa).

ATP contacts are provided by residues 29-36 (GLSGGVDS) and Leu-55. Cys-116 (nucleophile) is an active-site residue. A disulfide bridge links Cys-116 with Cys-225. Gly-141 contributes to the ATP binding site. An interaction with tRNA region spans residues 175–177 (KDQ). Cys-225 functions as the Cysteine persulfide intermediate in the catalytic mechanism. The segment at 330 to 331 (RY) is interaction with tRNA.

The protein belongs to the MnmA/TRMU family.

It is found in the cytoplasm. It carries out the reaction S-sulfanyl-L-cysteinyl-[protein] + uridine(34) in tRNA + AH2 + ATP = 2-thiouridine(34) in tRNA + L-cysteinyl-[protein] + A + AMP + diphosphate + H(+). In terms of biological role, catalyzes the 2-thiolation of uridine at the wobble position (U34) of tRNA, leading to the formation of s(2)U34. The sequence is that of tRNA-specific 2-thiouridylase MnmA from Prochlorococcus marinus (strain AS9601).